Reading from the N-terminus, the 358-residue chain is Protein-L-isoaspartate O-methyltransferase domain-containing protein 1 (358 aa).

The N-myristoyl glycine moiety is linked to residue Gly-2. Ser-64 is a catalytic residue. AdoMet binding motif stretches follow at residues 85 to 94 (LNLGSGTGYL), 160 to 164 (YDRIY), and 181 to 191 (LKVGGILVMPI). The BC-box stretch occupies residues 240–250 (VRNLQDLARIY). The segment at 300–339 (PLDSEEDERMEDDNKEEEDKDHSEALKPEEPPRNLLREKI) is disordered. Over residues 302-318 (DSEEDERMEDDNKEEED) the composition is skewed to acidic residues. Residues 319–339 (KDHSEALKPEEPPRNLLREKI) are compositionally biased toward basic and acidic residues. Residues 342–345 (LPLP) are CUL-box.

The protein belongs to the methyltransferase superfamily. L-isoaspartyl/D-aspartyl protein methyltransferase family. As to quaternary structure, component of the probable ECS(PCMTD1) E3 ubiquitin-protein ligase complex, at least composed of CUL5, ELOB, ELOC, RBX2 and PCMTD1.

It localises to the cytoplasm. Its subcellular location is the membrane. Substrate recognition component of an ECS (Elongin BC-CUL5-SOCS-box protein) E3 ubiquitin ligase complex which mediates the ubiquitination and subsequent proteasomal degradation of target proteins. Specifically binds to the methyltransferase cofactor S-adenosylmethionine (AdoMet) via the N-terminal AdoMet binding motif, but does not display methyltransferase activity. May provide an alternate maintenance pathway for modified proteins by acting as a damage-specific E3 ubiquitin ligase adaptor protein. In Gallus gallus (Chicken), this protein is Protein-L-isoaspartate O-methyltransferase domain-containing protein 1 (PCMTD1).